The sequence spans 292 residues: Acetylglutamate kinase (292 aa).

Substrate is bound by residues 64–65 (GG), arginine 86, and asparagine 190.

The protein belongs to the acetylglutamate kinase family. ArgB subfamily.

It localises to the cytoplasm. It catalyses the reaction N-acetyl-L-glutamate + ATP = N-acetyl-L-glutamyl 5-phosphate + ADP. It functions in the pathway amino-acid biosynthesis; L-arginine biosynthesis; N(2)-acetyl-L-ornithine from L-glutamate: step 2/4. Its function is as follows. Catalyzes the ATP-dependent phosphorylation of N-acetyl-L-glutamate. The polypeptide is Acetylglutamate kinase (Geotalea uraniireducens (strain Rf4) (Geobacter uraniireducens)).